The chain runs to 258 residues: Ribosomal RNA small subunit methyltransferase A (258 aa).

The S-adenosyl-L-methionine site is built by His-13, Leu-15, Gly-40, Glu-61, Asp-86, and Asn-106.

This sequence belongs to the class I-like SAM-binding methyltransferase superfamily. rRNA adenine N(6)-methyltransferase family. RsmA subfamily.

Its subcellular location is the cytoplasm. It catalyses the reaction adenosine(1518)/adenosine(1519) in 16S rRNA + 4 S-adenosyl-L-methionine = N(6)-dimethyladenosine(1518)/N(6)-dimethyladenosine(1519) in 16S rRNA + 4 S-adenosyl-L-homocysteine + 4 H(+). In terms of biological role, specifically dimethylates two adjacent adenosines (A1518 and A1519) in the loop of a conserved hairpin near the 3'-end of 16S rRNA in the 30S particle. May play a critical role in biogenesis of 30S subunits. The polypeptide is Ribosomal RNA small subunit methyltransferase A (Coxiella burnetii (strain RSA 331 / Henzerling II)).